A 349-amino-acid polypeptide reads, in one-letter code: DNA repair protein XRCC3 (349 aa).

Residue M1 is modified to N-acetylmethionine. 107–114 (GCSSAGKT) is an ATP binding site.

The protein belongs to the RecA family. RAD51 subfamily. Interacts with RAD51C and RAD51. Part of the CX3 complex consisting of RAD51C and XRCC3; the complex has a ring-like structure arranged into a flat disc around a central channel; CX3 can interact with RAD51 in vitro. Forms a complex with FANCD2, BRCA2 and phosphorylated FANCG. Interacts with SWSAP1 and ZSWIM7; involved in homologous recombination repair. Interacts directly with PALB2 which may serve as a scaffold for a HR complex containing PALB2, BRCA2, RAD51C, RAD51 and XRCC3.

It is found in the nucleus. The protein resides in the cytoplasm. The protein localises to the perinuclear region. Its subcellular location is the mitochondrion matrix. In terms of biological role, involved in the homologous recombination repair (HRR) pathway of double-stranded DNA, thought to repair chromosomal fragmentation, translocations and deletions. Part of the RAD21 paralog protein complex CX3 which acts in the BRCA1-BRCA2-dependent HR pathway. Upon DNA damage, CX3 acts downstream of RAD51 recruitment; the complex binds predominantly to the intersection of the four duplex arms of the Holliday junction (HJ) and to junctions of replication forks. Involved in HJ resolution and thus in processing HR intermediates late in the DNA repair process; the function may be linked to the CX3 complex and seems to involve GEN1 during mitotic cell cycle progression. Part of a PALB2-scaffolded HR complex containing BRCA2 and RAD51C and which is thought to play a role in DNA repair by HR. Plays a role in regulating mitochondrial DNA copy number under conditions of oxidative stress in the presence of RAD51 and RAD51C. The protein is DNA repair protein XRCC3 (Xrcc3) of Mus musculus (Mouse).